A 329-amino-acid polypeptide reads, in one-letter code: UPF0421 protein SH1063 (329 aa).

5 helical membrane passes run 25-45 (LFCL…IVTI), 60-80 (LPAT…FGDP), 87-107 (FSAL…GTTV), 108-128 (AVLT…FNFF), and 131-151 (LLTA…VLPP).

This sequence belongs to the UPF0421 family.

The protein localises to the cell membrane. The polypeptide is UPF0421 protein SH1063 (Staphylococcus haemolyticus (strain JCSC1435)).